Reading from the N-terminus, the 546-residue chain is Chaperonin GroEL (546 aa).

ATP is bound by residues 30 to 33 (TMGP), Lys-51, 87 to 91 (DGTTT), Gly-415, 478 to 480 (NAA), and Asp-494.

This sequence belongs to the chaperonin (HSP60) family. In terms of assembly, forms a cylinder of 14 subunits composed of two heptameric rings stacked back-to-back. Interacts with the co-chaperonin GroES.

It localises to the cytoplasm. It carries out the reaction ATP + H2O + a folded polypeptide = ADP + phosphate + an unfolded polypeptide.. Together with its co-chaperonin GroES, plays an essential role in assisting protein folding. The GroEL-GroES system forms a nano-cage that allows encapsulation of the non-native substrate proteins and provides a physical environment optimized to promote and accelerate protein folding. In Wolinella succinogenes (strain ATCC 29543 / DSM 1740 / CCUG 13145 / JCM 31913 / LMG 7466 / NCTC 11488 / FDC 602W) (Vibrio succinogenes), this protein is Chaperonin GroEL.